Here is a 207-residue protein sequence, read N- to C-terminus: UPF0319 protein VV2327 (207 aa).

Positions 1–18 are cleaved as a signal peptide; it reads MLRVLGLAGMLMSFNIHA.

The protein belongs to the UPF0319 family.

The polypeptide is UPF0319 protein VV2327 (Vibrio vulnificus (strain YJ016)).